Reading from the N-terminus, the 346-residue chain is Sensor protein kinase GraS (346 aa).

The next 2 membrane-spanning stretches (helical) occupy residues 15-35 (MNWI…SLID) and 43-63 (LFYI…LTYF). The Histidine kinase domain maps to 126–332 (EFVHDIKTPV…TVRLIFPLQN (207 aa)).

In terms of assembly, interacts with GraX.

It is found in the cell membrane. The enzyme catalyses ATP + protein L-histidine = ADP + protein N-phospho-L-histidine.. Member of the two-component regulatory system GraR/GraS involved in resistance against cationic antimicrobial peptides (CAMPs). Functions as a sensor protein kinase which phosphorylates GraR through the auxiliary protein GraX. In turn, GraR up-regulates many genes such as adhesins, exoproteins, transporters, toxins, and proteins involved in cell wall synthesis. Down-regulates the expression of many genes involved in RNA and amino acid synthesis or glycolysis. This chain is Sensor protein kinase GraS (graS), found in Staphylococcus aureus (strain MSSA476).